Here is a 209-residue protein sequence, read N- to C-terminus: Response regulator protein VraR (209 aa).

One can recognise a Response regulatory domain in the interval 4-120 (KVLFVDDHEM…DIADAVRKTY (117 aa)). A 4-aspartylphosphate modification is found at aspartate 55. Positions 141-206 (RAELYEMLTE…QAVIYAFQHN (66 aa)) constitute an HTH luxR-type domain. Positions 165–184 (NQEIASASHITIKTVKTHVS) form a DNA-binding region, H-T-H motif.

In terms of processing, phosphorylated by VraS.

Its subcellular location is the cytoplasm. Functionally, member of the two-component regulatory system VraS/VraR involved in the control of the cell wall peptidoglycan biosynthesis. This is Response regulator protein VraR (vraR) from Staphylococcus epidermidis (strain ATCC 35984 / DSM 28319 / BCRC 17069 / CCUG 31568 / BM 3577 / RP62A).